The chain runs to 930 residues: Translation initiation factor IF-2 (930 aa).

Positions 50-67 (FKPAAAPKVEAKPAAPKV) are enriched in low complexity. Disordered stretches follow at residues 50 to 217 (FKPA…SSEE) and 260 to 346 (EVVP…HELP). Composition is skewed to basic and acidic residues over residues 68–90 (SAEKKAEKSEPAKPAVAKEEAKP) and 110–125 (FKAEREARAKEQAERR). The segment covering 129 to 141 (KGNNRDQQQNGNR) has biased composition (low complexity). Composition is skewed to basic and acidic residues over residues 157 to 167 (RDNRRFNDQAK) and 262 to 295 (VPEKKEPAVDTRRKKQARPDKNRDDYDHEEDGPR). The segment covering 309 to 318 (NQKNSNWNNN) has biased composition (low complexity). Basic and acidic residues predominate over residues 337 to 346 (VTERKFHELP). Residues 432–599 (ERPPVVTIMG…TVLLVAEIQE (168 aa)) enclose the tr-type G domain. The G1 stretch occupies residues 441–448 (GHVDHGKT). 441–448 (GHVDHGKT) contacts GTP. The G2 stretch occupies residues 466 to 470 (GITQH). A G3 region spans residues 487–490 (DTPG). GTP contacts are provided by residues 487 to 491 (DTPGH) and 541 to 544 (NKID). Residues 541-544 (NKID) form a G4 region. The interval 577 to 579 (SAK) is G5.

Belongs to the TRAFAC class translation factor GTPase superfamily. Classic translation factor GTPase family. IF-2 subfamily.

It localises to the cytoplasm. One of the essential components for the initiation of protein synthesis. Protects formylmethionyl-tRNA from spontaneous hydrolysis and promotes its binding to the 30S ribosomal subunits. Also involved in the hydrolysis of GTP during the formation of the 70S ribosomal complex. The polypeptide is Translation initiation factor IF-2 (Streptococcus pneumoniae (strain CGSP14)).